The chain runs to 194 residues: ATP-dependent Clp protease proteolytic subunit (194 aa).

Ser-98 serves as the catalytic Nucleophile. His-123 is an active-site residue.

The protein belongs to the peptidase S14 family. Fourteen ClpP subunits assemble into 2 heptameric rings which stack back to back to give a disk-like structure with a central cavity, resembling the structure of eukaryotic proteasomes.

Its subcellular location is the cytoplasm. The enzyme catalyses Hydrolysis of proteins to small peptides in the presence of ATP and magnesium. alpha-casein is the usual test substrate. In the absence of ATP, only oligopeptides shorter than five residues are hydrolyzed (such as succinyl-Leu-Tyr-|-NHMec, and Leu-Tyr-Leu-|-Tyr-Trp, in which cleavage of the -Tyr-|-Leu- and -Tyr-|-Trp bonds also occurs).. Its function is as follows. Cleaves peptides in various proteins in a process that requires ATP hydrolysis. Has a chymotrypsin-like activity. Plays a major role in the degradation of misfolded proteins. This chain is ATP-dependent Clp protease proteolytic subunit, found in Staphylococcus saprophyticus subsp. saprophyticus (strain ATCC 15305 / DSM 20229 / NCIMB 8711 / NCTC 7292 / S-41).